An 89-amino-acid polypeptide reads, in one-letter code: Large ribosomal subunit protein eL34 (89 aa).

This sequence belongs to the eukaryotic ribosomal protein eL34 family.

In Methanococcus maripaludis (strain C6 / ATCC BAA-1332), this protein is Large ribosomal subunit protein eL34.